The primary structure comprises 161 residues: SsrA-binding protein (161 aa).

The protein belongs to the SmpB family.

It localises to the cytoplasm. Functionally, required for rescue of stalled ribosomes mediated by trans-translation. Binds to transfer-messenger RNA (tmRNA), required for stable association of tmRNA with ribosomes. tmRNA and SmpB together mimic tRNA shape, replacing the anticodon stem-loop with SmpB. tmRNA is encoded by the ssrA gene; the 2 termini fold to resemble tRNA(Ala) and it encodes a 'tag peptide', a short internal open reading frame. During trans-translation Ala-aminoacylated tmRNA acts like a tRNA, entering the A-site of stalled ribosomes, displacing the stalled mRNA. The ribosome then switches to translate the ORF on the tmRNA; the nascent peptide is terminated with the 'tag peptide' encoded by the tmRNA and targeted for degradation. The ribosome is freed to recommence translation, which seems to be the essential function of trans-translation. This chain is SsrA-binding protein, found in Baumannia cicadellinicola subsp. Homalodisca coagulata.